The following is a 67-amino-acid chain: DNA-directed RNA polymerase subunit omega (67 aa).

This sequence belongs to the RNA polymerase subunit omega family. In terms of assembly, the RNAP catalytic core consists of 2 alpha, 1 beta, 1 beta' and 1 omega subunit. When a sigma factor is associated with the core the holoenzyme is formed, which can initiate transcription.

It carries out the reaction RNA(n) + a ribonucleoside 5'-triphosphate = RNA(n+1) + diphosphate. Its function is as follows. Promotes RNA polymerase assembly. Latches the N- and C-terminal regions of the beta' subunit thereby facilitating its interaction with the beta and alpha subunits. In Listeria monocytogenes serotype 4b (strain F2365), this protein is DNA-directed RNA polymerase subunit omega.